We begin with the raw amino-acid sequence, 687 residues long: DNA-directed RNA polymerase subunit beta' (687 aa).

4 residues coordinate Zn(2+): C69, C71, C87, and C90. Residues D492, D494, and D496 each contribute to the Mg(2+) site.

This sequence belongs to the RNA polymerase beta' chain family. RpoC1 subfamily. In plastids the minimal PEP RNA polymerase catalytic core is composed of four subunits: alpha, beta, beta', and beta''. When a (nuclear-encoded) sigma factor is associated with the core the holoenzyme is formed, which can initiate transcription. Mg(2+) is required as a cofactor. The cofactor is Zn(2+).

The protein localises to the plastid. Its subcellular location is the chloroplast. The catalysed reaction is RNA(n) + a ribonucleoside 5'-triphosphate = RNA(n+1) + diphosphate. Functionally, DNA-dependent RNA polymerase catalyzes the transcription of DNA into RNA using the four ribonucleoside triphosphates as substrates. The chain is DNA-directed RNA polymerase subunit beta' from Silene latifolia (White campion).